A 108-amino-acid chain; its full sequence is Large ribosomal subunit protein uL24 (108 aa).

Belongs to the universal ribosomal protein uL24 family. As to quaternary structure, part of the 50S ribosomal subunit.

In terms of biological role, one of two assembly initiator proteins, it binds directly to the 5'-end of the 23S rRNA, where it nucleates assembly of the 50S subunit. Its function is as follows. One of the proteins that surrounds the polypeptide exit tunnel on the outside of the subunit. This Mycoplasmopsis synoviae (strain 53) (Mycoplasma synoviae) protein is Large ribosomal subunit protein uL24.